The primary structure comprises 135 residues: uncharacterized protein (135 aa).

The chain crosses the membrane as a helical span at residues 4–24 (LGVFLILASIVCGVVAICGCT).

The protein resides in the membrane. This is an uncharacterized protein from Methanocaldococcus jannaschii (strain ATCC 43067 / DSM 2661 / JAL-1 / JCM 10045 / NBRC 100440) (Methanococcus jannaschii).